The primary structure comprises 295 residues: Glutamyl-Q tRNA(Asp) synthetase (295 aa).

L-glutamate is bound by residues 5 to 9 (RFAPS) and E41. Positions 8 to 18 (PSPTGLLHIGS) match the 'HIGH' region motif. Zn(2+) contacts are provided by C97, C99, Y117, and C121. 2 residues coordinate L-glutamate: Y178 and R196. The 'KMSKS' region motif lies at 234–238 (KWSKQ). K237 provides a ligand contact to ATP.

Belongs to the class-I aminoacyl-tRNA synthetase family. GluQ subfamily. Zn(2+) serves as cofactor.

Catalyzes the tRNA-independent activation of glutamate in presence of ATP and the subsequent transfer of glutamate onto a tRNA(Asp). Glutamate is transferred on the 2-amino-5-(4,5-dihydroxy-2-cyclopenten-1-yl) moiety of the queuosine in the wobble position of the QUC anticodon. In Neisseria meningitidis serogroup C / serotype 2a (strain ATCC 700532 / DSM 15464 / FAM18), this protein is Glutamyl-Q tRNA(Asp) synthetase.